Reading from the N-terminus, the 257-residue chain is Sulfur carrier protein FdhD (257 aa).

C105 functions as the Cysteine persulfide intermediate in the catalytic mechanism.

Belongs to the FdhD family.

The protein localises to the cytoplasm. Functionally, required for formate dehydrogenase (FDH) activity. Acts as a sulfur carrier protein that transfers sulfur from IscS to the molybdenum cofactor prior to its insertion into FDH. This chain is Sulfur carrier protein FdhD, found in Saccharolobus solfataricus (strain ATCC 35092 / DSM 1617 / JCM 11322 / P2) (Sulfolobus solfataricus).